Here is a 556-residue protein sequence, read N- to C-terminus: ATP synthase subunit beta-1, mitochondrial (556 aa).

Residues 1–20 (MASRRVLSSLLRSSSGRSAA) show a composition bias toward low complexity. Residues 1–37 (MASRRVLSSLLRSSSGRSAAKLGNRNPRLPSPSPARH) are disordered. Residues 1–51 (MASRRVLSSLLRSSSGRSAAKLGNRNPRLPSPSPARHAAPCSYLLGRVAEY) constitute a mitochondrion transit peptide. The residue at position 59 (S59) is a Phosphoserine. 231 to 238 (GGAGVGKT) provides a ligand contact to ATP.

It belongs to the ATPase alpha/beta chains family. As to quaternary structure, F-type ATPases have 2 components, CF(1) - the catalytic core - and CF(0) - the membrane proton channel. CF(1) has five subunits: alpha(3), beta(3), gamma(1), delta(1), epsilon(1). CF(0) has three main subunits: a, b and c.

Its subcellular location is the mitochondrion. It is found in the mitochondrion inner membrane. The enzyme catalyses ATP + H2O + 4 H(+)(in) = ADP + phosphate + 5 H(+)(out). Mitochondrial membrane ATP synthase (F(1)F(0) ATP synthase or Complex V) produces ATP from ADP in the presence of a proton gradient across the membrane which is generated by electron transport complexes of the respiratory chain. F-type ATPases consist of two structural domains, F(1) - containing the extramembraneous catalytic core, and F(0) - containing the membrane proton channel, linked together by a central stalk and a peripheral stalk. During catalysis, ATP synthesis in the catalytic domain of F(1) is coupled via a rotary mechanism of the central stalk subunits to proton translocation. Subunits alpha and beta form the catalytic core in F(1). Rotation of the central stalk against the surrounding alpha(3)beta(3) subunits leads to hydrolysis of ATP in three separate catalytic sites on the beta subunits. This is ATP synthase subunit beta-1, mitochondrial from Arabidopsis thaliana (Mouse-ear cress).